Reading from the N-terminus, the 154-residue chain is Myoglobin (154 aa).

Positions 2–148 (GLSDGEWQLV…FRNEMAAQYK (147 aa)) constitute a Globin domain. Residue S4 is modified to Phosphoserine. H65 contacts nitrite. H65 lines the O2 pocket. T68 bears the Phosphothreonine mark. H94 provides a ligand contact to heme b.

As to quaternary structure, monomeric.

The protein resides in the cytoplasm. It is found in the sarcoplasm. It carries out the reaction Fe(III)-heme b-[protein] + nitric oxide + H2O = Fe(II)-heme b-[protein] + nitrite + 2 H(+). It catalyses the reaction H2O2 + AH2 = A + 2 H2O. Functionally, monomeric heme protein which primary function is to store oxygen and facilitate its diffusion within muscle tissues. Reversibly binds oxygen through a pentacoordinated heme iron and enables its timely and efficient release as needed during periods of heightened demand. Depending on the oxidative conditions of tissues and cells, and in addition to its ability to bind oxygen, it also has a nitrite reductase activity whereby it regulates the production of bioactive nitric oxide. Under stress conditions, like hypoxia and anoxia, it also protects cells against reactive oxygen species thanks to its pseudoperoxidase activity. This Bubalus bubalis (Domestic water buffalo) protein is Myoglobin.